The following is a 356-amino-acid chain: Protein-L-isoaspartate O-methyltransferase domain-containing protein 1 (356 aa).

Gly-2 carries N-myristoyl glycine lipidation. Ser-64 is an active-site residue. 3 adoMet binding motif regions span residues 85–94 (LNLGSGTGYL), 160–164 (YDRIY), and 181–191 (LKVGGILVMPI). The segment at 240 to 250 (VRNLQDLARIY) is BC-box. The tract at residues 299–331 (PLDSEEDEKMEEDKEEEEKEPGEALKPEEPPQN) is disordered. Residues 301 to 318 (DSEEDEKMEEDKEEEEKE) are compositionally biased toward acidic residues. Residues 319–331 (PGEALKPEEPPQN) are compositionally biased toward basic and acidic residues. Residues 340-343 (LPLP) are CUL-box.

This sequence belongs to the methyltransferase superfamily. L-isoaspartyl/D-aspartyl protein methyltransferase family. As to quaternary structure, component of the probable ECS(PCMTD1) E3 ubiquitin-protein ligase complex, at least composed of CUL5, ELOB, ELOC, RBX2 and PCMTD1. Interacts (via the BC-box) with ELOB and ELOC; the interaction is direct and stabilizes PCMTD1.

It localises to the cytoplasm. The protein resides in the membrane. Substrate recognition component of an ECS (Elongin BC-CUL5-SOCS-box protein) E3 ubiquitin ligase complex which mediates the ubiquitination and subsequent proteasomal degradation of target proteins. Specifically binds to the methyltransferase cofactor S-adenosylmethionine (AdoMet) via the N-terminal AdoMet binding motif, but does not display methyltransferase activity. May provide an alternate maintenance pathway for modified proteins by acting as a damage-specific E3 ubiquitin ligase adaptor protein. The sequence is that of Protein-L-isoaspartate O-methyltransferase domain-containing protein 1 (PCMTD1) from Bos taurus (Bovine).